A 924-amino-acid polypeptide reads, in one-letter code: Cell division control protein 13 (924 aa).

A disordered region spans residues 265-336 (PTTDISNMGE…KRKRKLSFHS (72 aa)). Polar residues predominate over residues 295-308 (GKYFSSKSYIQSQT). The residue at position 306 (Ser-306) is a Phosphoserine. Thr-308 bears the Phosphothreonine mark. Basic and acidic residues predominate over residues 309–326 (PERKTSVPNNWHDDDSGS). Ser-333 is modified (phosphoserine). Residues 500–686 (KMARKDPTIE…FEEYRRFFPI (187 aa)) constitute a DNA-binding region (OB).

In terms of assembly, interacts with POL1, EST1, FUN12, STM1, STN1 and TEN1.

It is found in the chromosome. Its subcellular location is the telomere. Its function is as follows. Single-stranded telomeric DNA-binding protein that regulates telomere replication. Has a role in both positive and negative regulation. Promotes [TG(1-3)] strand lengthening via interaction with EST1. Promotes [C(1-3)A] strand re-synthesis by DNA polymerase alpha via interaction with POL1. Negatively regulates telomere elongation of the G strand via binding with STN1 thereby inhibiting telomerase activity. The sequence is that of Cell division control protein 13 (CDC13) from Saccharomyces cerevisiae (strain ATCC 204508 / S288c) (Baker's yeast).